Here is a 211-residue protein sequence, read N- to C-terminus: Ion-translocating oxidoreductase complex subunit G (211 aa).

Residues 9–29 (GLTLAIFACATTGLVAMTQYL) form a helical membrane-spanning segment. FMN phosphoryl threonine is present on Thr-175.

The protein belongs to the RnfG family. In terms of assembly, the complex is composed of six subunits: RnfA, RnfB, RnfC, RnfD, RnfE and RnfG. Requires FMN as cofactor.

It is found in the cell inner membrane. Functionally, part of a membrane-bound complex that couples electron transfer with translocation of ions across the membrane. This chain is Ion-translocating oxidoreductase complex subunit G, found in Vibrio vulnificus (strain YJ016).